Reading from the N-terminus, the 1057-residue chain is Collagen alpha-1(I) chain (1057 aa).

Gln-1 is modified (pyrrolidone carboxylic acid). Over residues 1-10 (QLSYGYDEKS) the composition is skewed to basic and acidic residues. The nonhelical region (N-terminal) stretch occupies residues 1–17 (QLSYGYDEKSAGGISVP). The disordered stretch occupies residues 1 to 1057 (QLSYGYDEKS…AHDGGRYYRA (1057 aa)). Lys-9 is modified (allysine). Ser-10 is modified (phosphoserine). Collagen-like domains follow at residues 18–76 (GPMG…EAGK), 75–134 (GKPG…PGEN), 135–193 (GAPG…AKGE), and 195–252 (GPQG…GFPG). The interval 18-1031 (GPMGPSGPRG…PGPPGPPGPP (1014 aa)) is triple-helical region. 4-hydroxyproline occurs at positions 29, 32, 35, 44, 47, 50, 65, 80, 86, 95, and 101. The segment covering 37 to 56 (PQGFQGPPGEPGEPGASGPM) has biased composition (low complexity). Residues 68-82 (NGDDGEAGKPGRPGE) are compositionally biased toward basic and acidic residues. The residue at position 104 (Lys-104) is a 5-hydroxylysine; alternate. Lys-104 carries O-linked (Gal...) hydroxylysine; alternate glycosylation. The residue at position 110 (Ser-110) is a Phosphoserine. The segment covering 118 to 134 (DAGPAGPKGEPGSPGEN) has biased composition (low complexity). Residues Pro-128, Pro-131, Pro-137, Pro-146, and Pro-152 each carry the 4-hydroxyproline modification. The span at 157-170 (PAGARGNDGATGAA) shows a compositional bias: low complexity. Pro residues predominate over residues 172–184 (PPGPTGPAGPPGF). 4-hydroxyproline is present on residues Pro-173, Pro-182, Pro-185, Pro-212, Pro-215, Pro-227, Pro-233, Pro-242, Pro-248, Pro-251, and Pro-266. A compositionally biased stretch (low complexity) spans 218 to 269 (AGAAGPAGNPGADGQPGAKGANGAPGIAGAPGFPGARGPAGPQGPSGAPGPK). The residue at position 269 (Lys-269) is a 5-hydroxylysine. Pro-275, Pro-278, Pro-290, Pro-292, Pro-299, Pro-314, Pro-320, Pro-323, Pro-329, and Pro-335 each carry 4-hydroxyproline. Positions 287 to 296 (KGEPGPIGIQ) are enriched in low complexity. Positions 324 to 333 (GERGGPGSRG) are enriched in gly residues. Lys-344 carries the 5-hydroxylysine modification. 4-hydroxyproline occurs at positions 353, 362, 368, 374, 383, 386, 395, 404, 410, 422, 431, 440, 443, 461, 479, 485, 491, 497, 503, 509, 521, 530, 542, 554, 557, 563, 569, and 578. Residues 377 to 403 (KGLTGSPGSPGPDGKTGPPGPAGQDGR) are compositionally biased toward low complexity. Low complexity predominate over residues 412 to 431 (ARGQAGVMGFPGPKGAAGEP). Positions 473–500 (QGPAGSPGFQGLPGPAGPPGEAGKPGEQ) are enriched in low complexity. 2 consecutive Collagen-like domains span residues 522-579 (GERG…GLPG) and 555-613 (GAPG…PPGP). A compositionally biased stretch (low complexity) spans 539–566 (NGAPGNDGAKGDAGAPGAPGSQGAPGLQ). Lys-590 is modified (5-hydroxylysine). A 4-hydroxyproline mark is found at Pro-596, Pro-611, and Pro-617. Collagen-like domains follow at residues 618-676 (GDKG…AKGD) and 678-736 (GPPG…PPGP). Low complexity predominate over residues 623-637 (AGPSGPAGPTGARGA). At Ser-626 the chain carries Phosphoserine. Pro-638, Pro-644, Pro-647, Pro-656, Pro-662, Pro-680, Pro-689, and Pro-698 each carry 4-hydroxyproline. Residues 650–677 (AGFAGPPGADGQPGAKGEPGDAGAKGDA) are compositionally biased toward low complexity. Residue Lys-701 is modified to 5-hydroxylysine. Residues 706–722 (SAGPPGATGFPGAAGRV) are compositionally biased toward low complexity. 2 positions are modified to 4-hydroxyproline: Pro-710 and Pro-716. Pro-724 bears the 3-hydroxyproline mark. 4-hydroxyproline occurs at positions 725, 734, 737, 758, 764, 767, 776, and 785. The span at 751 to 760 (ETGPAGRPGE) shows a compositional bias: low complexity. Low complexity predominate over residues 770-785 (AGEKGSPGADGPAGAP). Positions 789–798 (GPQGIGGQRG) are enriched in gly residues. 10 positions are modified to 4-hydroxyproline: Pro-803, Pro-812, Pro-815, Pro-821, Pro-836, Pro-842, Pro-848, Pro-857, Pro-863, and Pro-869. The Collagen-like 9 domain occupies 804–861 (GQRGERGFPGLPGPSGEPGKQGPSGSSGERGPPGPAGPPGLAGPPGESGREGAPGAEG). Over residues 835–845 (PPGPAGPPGLA) the composition is skewed to pro residues. 5-hydroxylysine is present on Lys-872. The segment covering 881–896 (SGPPGAPGAPGAPGPV) has biased composition (pro residues). 4-hydroxyproline occurs at positions 884, 887, and 890. The segment covering 917–931 (AGPAGVRGPAGPQGP) has biased composition (low complexity). Collagen-like domains lie at 918 to 976 (GPAG…ASGP) and 972 to 1030 (GASG…PPGP). The segment covering 932–946 (RGDKGETGEQGDRGL) has biased composition (basic and acidic residues). Lys-935 carries the 5-hydroxylysine modification. Lys-947 carries the post-translational modification 5-hydroxylysine; alternate. O-linked (Gal...) hydroxylysine; alternate glycosylation is present at Lys-947. Pro-959, Pro-962, Pro-965, Pro-983, Pro-998, and Pro-1001 each carry 4-hydroxyproline. The span at 965–997 (PGEQGPSGASGPAGPRGPPGSAGAPGKDGLNGL) shows a compositional bias: low complexity. 3-hydroxyproline is present on Pro-1003. 4-hydroxyproline is present on Pro-1004. The segment covering 1016–1031 (VGPPGPPGPPGPPGPP) has biased composition (pro residues). Position 1018 is a 3-hydroxyproline (Pro-1018). Residue Pro-1019 is modified to 4-hydroxyproline. 3-hydroxyproline is present on Pro-1021. Pro-1022 is subject to 4-hydroxyproline. Residue Pro-1024 is modified to 3-hydroxyproline. A 4-hydroxyproline mark is found at Pro-1025, Pro-1028, and Pro-1031. The tract at residues 1032 to 1055 (SGAFDFSFLPQPPQEKAHDGGRYY) is nonhelical region (C-terminal). The segment covering 1046–1057 (EKAHDGGRYYRA) has biased composition (basic and acidic residues). Residue Lys-1047 is modified to Allysine.

The protein belongs to the fibrillar collagen family. As to quaternary structure, trimers of one alpha 2(I) and two alpha 1(I) chains. Contains mostly 4-hydroxyproline. Proline residues at the third position of the tripeptide repeating unit (G-X-Y) are hydroxylated in some or all of the chains. Post-translationally, contains 3-hydroxyproline at a few sites. This modification occurs on the first proline residue in the sequence motif Gly-Pro-Hyp, where Hyp is 4-hydroxyproline. In terms of processing, lysine residues at the third position of the tripeptide repeating unit (G-X-Y) are 5-hydroxylated in some or all of the chains. O-glycosylated on hydroxylated lysine residues. The O-linked glycan consists of a Glc-Gal disaccharide.

It is found in the secreted. It localises to the extracellular space. Its subcellular location is the extracellular matrix. Its function is as follows. Type I collagen is a member of group I collagen (fibrillar forming collagen). This Mammut americanum (American mastodon) protein is Collagen alpha-1(I) chain (COL1A1).